The primary structure comprises 900 residues: Alanine--tRNA ligase (900 aa).

Positions 604, 608, 708, and 712 each coordinate Zn(2+).

This sequence belongs to the class-II aminoacyl-tRNA synthetase family. The cofactor is Zn(2+).

It is found in the cytoplasm. It catalyses the reaction tRNA(Ala) + L-alanine + ATP = L-alanyl-tRNA(Ala) + AMP + diphosphate. Functionally, catalyzes the attachment of alanine to tRNA(Ala) in a two-step reaction: alanine is first activated by ATP to form Ala-AMP and then transferred to the acceptor end of tRNA(Ala). Also edits incorrectly charged Ser-tRNA(Ala) and Gly-tRNA(Ala) via its editing domain. The polypeptide is Alanine--tRNA ligase (Saccharolobus islandicus (strain L.S.2.15 / Lassen #1) (Sulfolobus islandicus)).